The primary structure comprises 84 residues: Putative membrane protein insertion efficiency factor (84 aa).

It belongs to the UPF0161 family.

It localises to the cell inner membrane. In terms of biological role, could be involved in insertion of integral membrane proteins into the membrane. This Acidiphilium cryptum (strain JF-5) protein is Putative membrane protein insertion efficiency factor.